The primary structure comprises 131 residues: Fumarate reductase subunit C (131 aa).

Transmembrane regions (helical) follow at residues 30–50 (EGTA…LFAL), 63–83 (FLQN…ALLH), and 109–129 (IIKS…FVAL).

Belongs to the FrdC family. In terms of assembly, part of an enzyme complex containing four subunits: a flavoprotein (FrdA), an iron-sulfur protein (FrdB), and two hydrophobic anchor proteins (FrdC and FrdD).

It is found in the cell inner membrane. Functionally, two distinct, membrane-bound, FAD-containing enzymes are responsible for the catalysis of fumarate and succinate interconversion; fumarate reductase is used in anaerobic growth, and succinate dehydrogenase is used in aerobic growth. Anchors the catalytic components of the fumarate reductase complex to the cell inner membrane, binds quinones. The chain is Fumarate reductase subunit C from Shigella boydii serotype 4 (strain Sb227).